We begin with the raw amino-acid sequence, 409 residues long: MALVNEHFLKLPNNYLFSDIAKKVNAFKVSHPKTDLIRLGIGDVTRPLPQTSIEAMYKAVDELANKETFHGYGPEQGYDFLIDAVIRNDYAPRGVYLEPGEVFISDGAKSDTGNIGDILRHDNSIGVTDPIYPVYIDSNVMCGRAGILEDGRWSNVVYLPCLSENNFVPEIPDRRIDILYLCYPNNPTGTVISKAELKKWVNYALENDTLILYDAAYEAYIQDPDIPHSIYEIKGAKKVAIEFRSFSKTAGFTGVRCGYTVVPKELTAATLEGERIPLNRMWNRRQCTKFNGTSYITQRGAEAIYTPEGKKQVKAIIQYYMANARIMKEALESTGLKVFGGENAPYLWVKAPGEVSSWKFFEQMLYEANVVGTPGVGFGPSGEGYIRLTAFGERADCEEAMKRIRKWLL.

Positions 15 and 42 each coordinate substrate. Pyridoxal 5'-phosphate-binding positions include Y72, 108–109, Y132, N186, Y217, and 245–247; these read AK and SFS. Positions 109, 132, and 186 each coordinate substrate. K248 carries the post-translational modification N6-(pyridoxal phosphate)lysine. Positions 256 and 291 each coordinate pyridoxal 5'-phosphate. Positions 291 and 387 each coordinate substrate.

It belongs to the class-I pyridoxal-phosphate-dependent aminotransferase family. LL-diaminopimelate aminotransferase subfamily. In terms of assembly, homodimer. Requires pyridoxal 5'-phosphate as cofactor.

It catalyses the reaction (2S,6S)-2,6-diaminopimelate + 2-oxoglutarate = (S)-2,3,4,5-tetrahydrodipicolinate + L-glutamate + H2O + H(+). The protein operates within amino-acid biosynthesis; L-lysine biosynthesis via DAP pathway; LL-2,6-diaminopimelate from (S)-tetrahydrodipicolinate (aminotransferase route): step 1/1. Functionally, involved in the synthesis of meso-diaminopimelate (m-DAP or DL-DAP), required for both lysine and peptidoglycan biosynthesis. Catalyzes the direct conversion of tetrahydrodipicolinate to LL-diaminopimelate. This Phocaeicola vulgatus (strain ATCC 8482 / DSM 1447 / JCM 5826 / CCUG 4940 / NBRC 14291 / NCTC 11154) (Bacteroides vulgatus) protein is LL-diaminopimelate aminotransferase.